The sequence spans 397 residues: uncharacterized protein (397 aa).

2 disordered regions span residues 159-203 (LNSS…KSTI) and 221-397 (NSVK…KTKN). A compositionally biased stretch (low complexity) spans 221–240 (NSVKSSPSKSFVSISSPVQS). Polar residues-rich tracts occupy residues 285–309 (TSTL…SSST) and 320–330 (VNPNSTSSVTF). Positions 342–371 (CSRCKKSKKGCDRQRPCGRCRDAGLNSEDC) form a DNA-binding region, zn(2)-C6 fungal-type. Over residues 350 to 363 (KGCDRQRPCGRCRD) the composition is skewed to basic and acidic residues. The span at 383–397 (RKPRGRGRGRPKTKN) shows a compositional bias: basic residues.

The protein localises to the nucleus. This is an uncharacterized protein from Schizosaccharomyces pombe (strain 972 / ATCC 24843) (Fission yeast).